Here is a 251-residue protein sequence, read N- to C-terminus: Imidazole glycerol phosphate synthase subunit HisF (251 aa).

Active-site residues include aspartate 11 and aspartate 130.

It belongs to the HisA/HisF family. As to quaternary structure, heterodimer of HisH and HisF.

It is found in the cytoplasm. It carries out the reaction 5-[(5-phospho-1-deoxy-D-ribulos-1-ylimino)methylamino]-1-(5-phospho-beta-D-ribosyl)imidazole-4-carboxamide + L-glutamine = D-erythro-1-(imidazol-4-yl)glycerol 3-phosphate + 5-amino-1-(5-phospho-beta-D-ribosyl)imidazole-4-carboxamide + L-glutamate + H(+). It functions in the pathway amino-acid biosynthesis; L-histidine biosynthesis; L-histidine from 5-phospho-alpha-D-ribose 1-diphosphate: step 5/9. IGPS catalyzes the conversion of PRFAR and glutamine to IGP, AICAR and glutamate. The HisF subunit catalyzes the cyclization activity that produces IGP and AICAR from PRFAR using the ammonia provided by the HisH subunit. In Flavobacterium johnsoniae (strain ATCC 17061 / DSM 2064 / JCM 8514 / BCRC 14874 / CCUG 350202 / NBRC 14942 / NCIMB 11054 / UW101) (Cytophaga johnsonae), this protein is Imidazole glycerol phosphate synthase subunit HisF.